The sequence spans 155 residues: MESLQTPQHRENQDKREKEYGVKHMPMGNNAGNLEPEKRKAVRVALSSATAAQNIPSSVHCGCSKQWRLRLPSESLQSRGQVMKRPNNILKLRNLDLLIYPWPELRRRQVASDLMSLLLLPAFSGLTWAPFLFLFTYLPPFLNLLTVGFVSYFLV.

A disordered region spans residues 1–34 (MESLQTPQHRENQDKREKEYGVKHMPMGNNAGNL). The span at 8 to 22 (QHRENQDKREKEYGV) shows a compositional bias: basic and acidic residues. A helical transmembrane segment spans residues 115 to 135 (MSLLLLPAFSGLTWAPFLFLF).

The protein resides in the membrane. This is an uncharacterized protein from Homo sapiens (Human).